Reading from the N-terminus, the 305-residue chain is Oxidoreductase swnR (305 aa).

This sequence belongs to the NmrA-type oxidoreductase family. Isoflavone reductase subfamily.

The enzyme catalyses L-pipecolate + O2 = L-1-piperideine-6-carboxylate + H2O2 + H(+). It functions in the pathway mycotoxin biosynthesis. Its function is as follows. Oxidoreductase; part of the gene cluster that mediates the biosynthesis of swainsonine (SW), a cytotoxic fungal alkaloid and a potential cancer therapy drug. Swainsonine production occurs via a multibranched pathway and is dispensable for fungal colonization of plants and infection of insect hosts. The first step of swainsonine biosynthesis is the production of the precursor pipecolic acid (PA) via conversion of L-lysine (Lys) to 1-piperideine-6-carboxylate (P6C) by the aminotransferase swnA, the latter being further reduced to PA by the reductase swnR. PA can be converted from lysine by both the SW biosynthetic cluster and the unclustered genes such as lysine cyclodeaminase. The PKS-NRPS hybrid synthetase swnK uptakes and condensates PA and malonyl-CoA with and without skipping of the ketoreductase (KR) domain in order to produce 3 intermediates, 1-oxoindolizidine, (1S)-1-hydroxyindolizin, and (1R)-1-hydroxyindolizine; with the transisomer (1S)-1-hydroxyindolizin being predominant. The terminal thioester reductase (TE) domain of swnK is involved in reduction of the thioester bond to release the intermediate aldehydes. The oxidoreductase swnN could contribute to the reduction of 1-oxoindolizidine to (1S)-1-hydroxyindolizin and (1R)-1-hydroxyindolizine, contributing to the major route of SW production. The dioxygenase swnH2 would be responsible for the oxidization of (1R)-1-hydroxyindolizine into (1R,2S)-1,2-dihydroxyindolizine and of (1S)-1-hydroxyindolizin to yield both (1R,2S)-1,2-dihydroxyindolizine and (1S,2S)-1,2-dihydroxyindolizine. The dioxygenase swnH1 then performs the conversion of the 1,2-dihydroxyindolizine epimers to SW. The protein is Oxidoreductase swnR of Metarhizium robertsii (strain ARSEF 23 / ATCC MYA-3075) (Metarhizium anisopliae (strain ARSEF 23)).